The following is a 322-amino-acid chain: GRB2-related adaptor protein 2 (322 aa).

The SH3 1 domain maps to 1–56; sequence MEATAKFDFMASGEDELSFRTGDILKILSNQEEWLKAELGSQEGYVPKNFIDIEFP. Tyr45 carries the phosphotyrosine modification. The region spanning 58–149 is the SH2 domain; sequence WFHEGLSRHQ…QKQVFLRDGT (92 aa). Lys106 bears the N6-acetyllysine mark. The segment at 143 to 216 is disordered; that stretch reads VFLRDGTQDQ…TPGPQPPQQQ (74 aa). Positions 148-163 are enriched in basic and acidic residues; that stretch reads GTQDQGHRGNSLDRRS. Phosphoserine is present on Ser186. Over residues 193–204 the composition is skewed to low complexity; that stretch reads PQQFHPHQQPSP. Ser230 carries the phosphoserine modification. Position 254 is a phosphothreonine (Thr254). Residues 263 to 322 form the SH3 2 domain; the sequence is GRVRWARALYDFEALEEDELGFRSGEVVEVLDSSNPSWWTGRLHNKLGLFPANYVAPMMR.

It belongs to the GRB2/sem-5/DRK family. As to quaternary structure, interacts with phosphorylated LAT and LAX1 upon TCR activation. Interacts with SHB. Interacts with PTPN23. Interacts with phosphorylated LIME1 upon TCR activation.

The protein resides in the nucleus. The protein localises to the cytoplasm. It localises to the endosome. Interacts with SLP-76 to regulate NF-AT activation. Binds to tyrosine-phosphorylated shc. In Mus musculus (Mouse), this protein is GRB2-related adaptor protein 2 (Grap2).